Consider the following 399-residue polypeptide: Leu/Ile/Val-binding protein homolog 7 (399 aa).

A signal peptide spans 1–22 (MEKHLIALSVAALQAGAAPASA).

It belongs to the leucine-binding protein family.

Functionally, component of an amino-acid transport system. This is Leu/Ile/Val-binding protein homolog 7 from Brucella abortus (strain 2308).